Here is a 117-residue protein sequence, read N- to C-terminus: Large ribosomal subunit protein eL34 (117 aa).

Serine 12 is modified (phosphoserine). Residues lysine 36 and lysine 43 each carry the N6-acetyllysine modification. Lysine 108 participates in a covalent cross-link: Glycyl lysine isopeptide (Lys-Gly) (interchain with G-Cter in SUMO2).

Belongs to the eukaryotic ribosomal protein eL34 family. As to quaternary structure, component of the large ribosomal subunit.

The protein localises to the cytoplasm. Its subcellular location is the cytosol. It is found in the endoplasmic reticulum. Its function is as follows. Component of the large ribosomal subunit. The ribosome is a large ribonucleoprotein complex responsible for the synthesis of proteins in the cell. The polypeptide is Large ribosomal subunit protein eL34 (Rpl34) (Rattus norvegicus (Rat)).